The primary structure comprises 69 residues: Omega-oxotoxin-Ol1a (69 aa).

In terms of domain architecture, Oxytoxin-type inhibitor cystine knot (ICK) spans 1–68 (DWECLPLHSS…GKINTCDKYK (68 aa)). 5 disulfides stabilise this stretch: C4–C18, C11–C23, C15–C64, C17–C52, and C25–C50. An Asparagine amide modification is found at N69.

It belongs to the spiderine family. Spiderine subfamily. In terms of tissue distribution, expressed by the venom gland.

The protein localises to the secreted. In terms of biological role, weak blocker of vertebrate P/Q-, N- and L-type voltage-gated calcium channels (Cav1 and Cav2). Is both paralytic and lethal when injected into lepidopteran larvae. Is not toxic to mice. This is Omega-oxotoxin-Ol1a from Oxyopes lineatus (Lynx spider).